The following is a 116-amino-acid chain: MGSRLSQPFESYITAPPGTAAAPAKPAPPATPGAPTSPAEHRLLKTCWSCRVLSGLGLMGAGGYVYWVARKPMKMGYPPSPWTITQMVIGLSENQGIATWGIVVMADPKGKAYRVV.

A disordered region spans residues 1–39; sequence MGSRLSQPFESYITAPPGTAAAPAKPAPPATPGAPTSPA. A compositionally biased stretch (low complexity) spans 14-24; the sequence is TAPPGTAAAPA. A run of 2 helical transmembrane segments spans residues 52–69 and 82–104; these read VLSGLGLMGAGGYVYWVA and WTITQMVIGLSENQGIATWGIVV.

In terms of assembly, interacts with incompletely assembled mitochondrial NADH:ubiquinone oxidoreductase complex (complex I).

It is found in the mitochondrion inner membrane. Functionally, required for the assembly of the mitochondrial NADH:ubiquinone oxidoreductase complex (complex I). Involved in the assembly of the distal region of complex I. In Homo sapiens (Human), this protein is Distal membrane-arm assembly complex protein 1.